The primary structure comprises 599 residues: Elongation factor 4 (599 aa).

The tr-type G domain occupies 3–185 (KNIRNFSIIA…AIVERIPPPS (183 aa)). GTP-binding positions include 15 to 20 (DHGKST) and 132 to 135 (NKID).

It belongs to the TRAFAC class translation factor GTPase superfamily. Classic translation factor GTPase family. LepA subfamily.

Its subcellular location is the cell membrane. It carries out the reaction GTP + H2O = GDP + phosphate + H(+). Its function is as follows. Required for accurate and efficient protein synthesis under certain stress conditions. May act as a fidelity factor of the translation reaction, by catalyzing a one-codon backward translocation of tRNAs on improperly translocated ribosomes. Back-translocation proceeds from a post-translocation (POST) complex to a pre-translocation (PRE) complex, thus giving elongation factor G a second chance to translocate the tRNAs correctly. Binds to ribosomes in a GTP-dependent manner. This Syntrophomonas wolfei subsp. wolfei (strain DSM 2245B / Goettingen) protein is Elongation factor 4.